The primary structure comprises 174 residues: Peptide methionine sulfoxide reductase MsrA (174 aa).

Cysteine 11 is an active-site residue.

This sequence belongs to the MsrA Met sulfoxide reductase family.

It catalyses the reaction L-methionyl-[protein] + [thioredoxin]-disulfide + H2O = L-methionyl-(S)-S-oxide-[protein] + [thioredoxin]-dithiol. The enzyme catalyses [thioredoxin]-disulfide + L-methionine + H2O = L-methionine (S)-S-oxide + [thioredoxin]-dithiol. In terms of biological role, has an important function as a repair enzyme for proteins that have been inactivated by oxidation. Catalyzes the reversible oxidation-reduction of methionine sulfoxide in proteins to methionine. In Pasteurella multocida (strain Pm70), this protein is Peptide methionine sulfoxide reductase MsrA.